A 345-amino-acid polypeptide reads, in one-letter code: Methylthioribose-1-phosphate isomerase (345 aa).

Substrate is bound by residues 47–49 (RGA), arginine 90, and glutamine 197. The active-site Proton donor is aspartate 238. Residue 248 to 249 (NK) participates in substrate binding.

It belongs to the eIF-2B alpha/beta/delta subunits family. MtnA subfamily.

It carries out the reaction 5-(methylsulfanyl)-alpha-D-ribose 1-phosphate = 5-(methylsulfanyl)-D-ribulose 1-phosphate. The protein operates within amino-acid biosynthesis; L-methionine biosynthesis via salvage pathway; L-methionine from S-methyl-5-thio-alpha-D-ribose 1-phosphate: step 1/6. Functionally, catalyzes the interconversion of methylthioribose-1-phosphate (MTR-1-P) into methylthioribulose-1-phosphate (MTRu-1-P). The protein is Methylthioribose-1-phosphate isomerase of Caldanaerobacter subterraneus subsp. tengcongensis (strain DSM 15242 / JCM 11007 / NBRC 100824 / MB4) (Thermoanaerobacter tengcongensis).